The chain runs to 188 residues: Probable RNA-binding protein 18 (188 aa).

Residues 23-104 (HRLWIGNIDP…KKLVVRWAHA (82 aa)) form the RRM domain. Positions 151-188 (EENPDDYSGPSAYTYNKPPDKREKRSQPYHKHFRKHRR) are disordered. Residues 177–188 (QPYHKHFRKHRR) show a composition bias toward basic residues.

This Danio rerio (Zebrafish) protein is Probable RNA-binding protein 18 (rbm18).